The following is a 60-amino-acid chain: Large ribosomal subunit protein uL30 (60 aa).

It belongs to the universal ribosomal protein uL30 family. Part of the 50S ribosomal subunit.

This chain is Large ribosomal subunit protein uL30, found in Streptomyces avermitilis (strain ATCC 31267 / DSM 46492 / JCM 5070 / NBRC 14893 / NCIMB 12804 / NRRL 8165 / MA-4680).